The primary structure comprises 118 residues: Large ribosomal subunit protein bL20 (118 aa).

It belongs to the bacterial ribosomal protein bL20 family.

Functionally, binds directly to 23S ribosomal RNA and is necessary for the in vitro assembly process of the 50S ribosomal subunit. It is not involved in the protein synthesizing functions of that subunit. The protein is Large ribosomal subunit protein bL20 of Shigella flexneri serotype 5b (strain 8401).